Here is a 428-residue protein sequence, read N- to C-terminus: Dihydroorotase (428 aa).

Zn(2+) contacts are provided by His59 and His61. Substrate contacts are provided by residues His61–Arg63 and Asn93. 3 residues coordinate Zn(2+): Asp151, His178, and His231. Residue Asn277 coordinates substrate. Zn(2+) is bound at residue Asp304. The active site involves Asp304. Substrate is bound by residues His308 and Phe322–Gly323.

This sequence belongs to the metallo-dependent hydrolases superfamily. DHOase family. Class I DHOase subfamily. The cofactor is Zn(2+).

The catalysed reaction is (S)-dihydroorotate + H2O = N-carbamoyl-L-aspartate + H(+). It participates in pyrimidine metabolism; UMP biosynthesis via de novo pathway; (S)-dihydroorotate from bicarbonate: step 3/3. In terms of biological role, catalyzes the reversible cyclization of carbamoyl aspartate to dihydroorotate. In Bacillus cereus (strain ZK / E33L), this protein is Dihydroorotase.